A 575-amino-acid chain; its full sequence is Proline--tRNA ligase (575 aa).

It belongs to the class-II aminoacyl-tRNA synthetase family. ProS type 1 subfamily. As to quaternary structure, homodimer.

Its subcellular location is the cytoplasm. The catalysed reaction is tRNA(Pro) + L-proline + ATP = L-prolyl-tRNA(Pro) + AMP + diphosphate. Its function is as follows. Catalyzes the attachment of proline to tRNA(Pro) in a two-step reaction: proline is first activated by ATP to form Pro-AMP and then transferred to the acceptor end of tRNA(Pro). As ProRS can inadvertently accommodate and process non-cognate amino acids such as alanine and cysteine, to avoid such errors it has two additional distinct editing activities against alanine. One activity is designated as 'pretransfer' editing and involves the tRNA(Pro)-independent hydrolysis of activated Ala-AMP. The other activity is designated 'posttransfer' editing and involves deacylation of mischarged Ala-tRNA(Pro). The misacylated Cys-tRNA(Pro) is not edited by ProRS. In Anaeromyxobacter sp. (strain Fw109-5), this protein is Proline--tRNA ligase.